Consider the following 358-residue polypeptide: MQKNDDLLRERRKDEHVALGVKQNENLAPSSLEDIQLIGTSIPRYNVKDIDLTTTFLGATVPFPFYINAMTGGSRHTKRINAELAEIAREVAIPMAVGSQSAALKNSSLIDTYQVVREVNPKGIILANVSPEVDIQDGIRAIEMLEADALQIHINPAQELVMQEGDRSFSHWLSRIEAYVKNSPVPVVVKEVGFGMTRETVKTLAEIGVTTVDLAGKGGTNFAQIENDRRRDQAYNFLLDWGISTGQALIDMQHADAPKIAYLASGGIRNPLDIVKALALGADSVGMAGQIISSLKKDGVSKTIEKLELWKEQLRGLFVLANAKNIAELKETPLIVSGELAKWGSLREIDLVQLANRK.

12–13 (RK) contributes to the substrate binding site. Residues 69–71 (AMT), S99, and N128 contribute to the FMN site. Q158 is a binding site for substrate. Residue E159 coordinates Mg(2+). FMN-binding positions include K190, T220, 267 to 269 (GIR), and 288 to 289 (AG).

This sequence belongs to the IPP isomerase type 2 family. Homooctamer. Dimer of tetramers. Requires FMN as cofactor. NADPH serves as cofactor. Mg(2+) is required as a cofactor.

It is found in the cytoplasm. It carries out the reaction isopentenyl diphosphate = dimethylallyl diphosphate. Functionally, involved in the biosynthesis of isoprenoids. Catalyzes the 1,3-allylic rearrangement of the homoallylic substrate isopentenyl (IPP) to its allylic isomer, dimethylallyl diphosphate (DMAPP). This chain is Isopentenyl-diphosphate delta-isomerase, found in Listeria innocua serovar 6a (strain ATCC BAA-680 / CLIP 11262).